The chain runs to 91 residues: DNA-binding protein HU (91 aa).

Belongs to the bacterial histone-like protein family.

In terms of biological role, histone-like DNA-binding protein which is capable of wrapping DNA to stabilize it, and thus to prevent its denaturation under extreme environmental conditions. The chain is DNA-binding protein HU (hup) from Clostridium pasteurianum.